Consider the following 131-residue polypeptide: MSWQTYVDDHLMCETDGQHLTAAAIIGHDGSVWAQSANFPQFKPAEIAAIMKDFDEPGSLAPTGLHLGGTKYMVIQGEPGAVIRGKKGPGGITVKKTTQALIIGIYDEPMTPGQCNMVVERLGDYLVDQGL.

This sequence belongs to the profilin family. Occurs in many kinds of cells as a complex with monomeric actin in a 1:1 ratio.

The protein resides in the cytoplasm. Its subcellular location is the cytoskeleton. Its function is as follows. Binds to actin and affects the structure of the cytoskeleton. At high concentrations, profilin prevents the polymerization of actin, whereas it enhances it at low concentrations. By binding to PIP2, it inhibits the formation of IP3 and DG. In Litchi chinensis (Lychee), this protein is Profilin.